A 235-amino-acid polypeptide reads, in one-letter code: Ubiquinone/menaquinone biosynthesis C-methyltransferase UbiE (235 aa).

Positions 60 and 81 each coordinate S-adenosyl-L-methionine.

This sequence belongs to the class I-like SAM-binding methyltransferase superfamily. MenG/UbiE family.

It carries out the reaction a 2-demethylmenaquinol + S-adenosyl-L-methionine = a menaquinol + S-adenosyl-L-homocysteine + H(+). It catalyses the reaction a 2-methoxy-6-(all-trans-polyprenyl)benzene-1,4-diol + S-adenosyl-L-methionine = a 5-methoxy-2-methyl-3-(all-trans-polyprenyl)benzene-1,4-diol + S-adenosyl-L-homocysteine + H(+). It functions in the pathway quinol/quinone metabolism; menaquinone biosynthesis; menaquinol from 1,4-dihydroxy-2-naphthoate: step 2/2. The protein operates within cofactor biosynthesis; ubiquinone biosynthesis. Functionally, methyltransferase required for the conversion of demethylmenaquinol (DMKH2) to menaquinol (MKH2) and the conversion of 2-polyprenyl-6-methoxy-1,4-benzoquinol (DDMQH2) to 2-polyprenyl-3-methyl-6-methoxy-1,4-benzoquinol (DMQH2). The polypeptide is Ubiquinone/menaquinone biosynthesis C-methyltransferase UbiE (Geotalea daltonii (strain DSM 22248 / JCM 15807 / FRC-32) (Geobacter daltonii)).